A 159-amino-acid polypeptide reads, in one-letter code: Ribosomal RNA large subunit methyltransferase H (159 aa).

S-adenosyl-L-methionine contacts are provided by residues leucine 76, glycine 108, and 127–132 (FSKMTF).

Belongs to the RNA methyltransferase RlmH family. In terms of assembly, homodimer.

Its subcellular location is the cytoplasm. It catalyses the reaction pseudouridine(1915) in 23S rRNA + S-adenosyl-L-methionine = N(3)-methylpseudouridine(1915) in 23S rRNA + S-adenosyl-L-homocysteine + H(+). Functionally, specifically methylates the pseudouridine at position 1915 (m3Psi1915) in 23S rRNA. In Clostridium tetani (strain Massachusetts / E88), this protein is Ribosomal RNA large subunit methyltransferase H.